The chain runs to 367 residues: Uroporphyrinogen decarboxylase (367 aa).

N-acetylmethionine is present on Met1. Residues Arg37, Ala39, Arg41, Arg50, Asp86, Tyr164, Ser219, and His339 each contribute to the coproporphyrinogen I site. Arg37, Ala39, and Arg41 together coordinate coproporphyrinogen III. Coproporphyrinogen III is bound by residues Asp86, Tyr164, Ser219, and His339.

This sequence belongs to the uroporphyrinogen decarboxylase family. In terms of assembly, homodimer.

It localises to the cytoplasm. The protein localises to the cytosol. It catalyses the reaction uroporphyrinogen III + 4 H(+) = coproporphyrinogen III + 4 CO2. The catalysed reaction is uroporphyrinogen I + 4 H(+) = coproporphyrinogen I + 4 CO2. It functions in the pathway porphyrin-containing compound metabolism; protoporphyrin-IX biosynthesis; coproporphyrinogen-III from 5-aminolevulinate: step 4/4. In terms of biological role, catalyzes the sequential decarboxylation of the four acetate side chains of uroporphyrinogen to form coproporphyrinogen and participates in the fifth step in the heme biosynthetic pathway. Isomer I or isomer III of uroporphyrinogen may serve as substrate, but only coproporphyrinogen III can ultimately be converted to heme. In vitro also decarboxylates pentacarboxylate porphyrinogen I. The polypeptide is Uroporphyrinogen decarboxylase (Mus musculus (Mouse)).